The chain runs to 217 residues: Thymidylate kinase (217 aa).

Glycine 11–serine 18 is an ATP binding site.

This sequence belongs to the thymidylate kinase family.

It carries out the reaction dTMP + ATP = dTDP + ADP. Functionally, phosphorylation of dTMP to form dTDP in both de novo and salvage pathways of dTTP synthesis. The chain is Thymidylate kinase from Alkalilimnicola ehrlichii (strain ATCC BAA-1101 / DSM 17681 / MLHE-1).